The following is a 798-amino-acid chain: Protocadherin beta-10 (798 aa).

The N-terminal stretch at 1–26 (MAVRELCFSRQRQVLFLFLFWGVSLA) is a signal peptide. Over 27-690 (GSGFGRYSVT…AQADLLTVYL (664 aa)) the chain is Extracellular. 5 consecutive Cadherin domains span residues 35 to 133 (VTEE…APVF), 138 to 242 (TVLK…APQF), 247 to 347 (YETQ…PPEL), 352 to 451 (FSNS…APAF), and 456 to 561 (YTLF…SPFV). N-linked (GlcNAc...) asparagine glycosylation is present at Asn-169. Residues Asn-418 and Asn-436 are each glycosylated (N-linked (GlcNAc...) asparagine). N-linked (GlcNAc...) asparagine glycosylation is present at Asn-567. Positions 568 to 671 (GSAPCTELVP…LVDGFSQPYL (104 aa)) constitute a Cadherin 6 domain. The helical transmembrane segment at 691-711 (VVALASVSSLFLFSVLLFVAV) threads the bilayer. Topologically, residues 712 to 798 (RLCRRSRAAS…FRNSFGFNIQ (87 aa)) are cytoplasmic.

The protein resides in the cell membrane. Functionally, potential calcium-dependent cell-adhesion protein. May be involved in the establishment and maintenance of specific neuronal connections in the brain. The chain is Protocadherin beta-10 (PCDHB10) from Pan troglodytes (Chimpanzee).